A 153-amino-acid chain; its full sequence is Transcriptional repressor NrdR (153 aa).

Positions 1–22 are disordered; it reads MRCPACHHNGTRVLDSRPAHEG. Residues 3 to 34 fold into a zinc finger; sequence CPACHHNGTRVLDSRPAHEGRSIRRRRECESC. The ATP-cone domain occupies 49–139; that stretch reads LIVVKKDGTR…VYRQFKDINV (91 aa).

It belongs to the NrdR family. Zn(2+) serves as cofactor.

Its function is as follows. Negatively regulates transcription of bacterial ribonucleotide reductase nrd genes and operons by binding to NrdR-boxes. The sequence is that of Transcriptional repressor NrdR from Halalkalibacterium halodurans (strain ATCC BAA-125 / DSM 18197 / FERM 7344 / JCM 9153 / C-125) (Bacillus halodurans).